The sequence spans 391 residues: Terminal nucleotidyltransferase 5C (391 aa).

It belongs to the TENT family. As to quaternary structure, interacts with BCCIP and PABPC1; the interaction has no effect on TENT5C poly(A) polymerase function. Interacts with PLK4; this interaction leads to the TENT5C recruitment into the centrosome.

It is found in the nucleus. The protein localises to the cytoplasm. The protein resides in the cytoskeleton. It localises to the microtubule organizing center. Its subcellular location is the centrosome. It carries out the reaction RNA(n) + ATP = RNA(n)-3'-adenine ribonucleotide + diphosphate. In terms of biological role, catalyzes the transfer of one adenosine molecule from an ATP to an mRNA poly(A) tail bearing a 3'-OH terminal group and enhances mRNA stability and gene expression. Can also elongate RNA oligos ending with uridine molecule, provided that the sequence is adenosine-rich. Mainly targets mRNAs encoding endoplasmic reticulum-targeted protein. In Rattus norvegicus (Rat), this protein is Terminal nucleotidyltransferase 5C.